Reading from the N-terminus, the 175-residue chain is Ribosome maturation factor RimM (175 aa).

The PRC barrel domain occupies 96–172 (PDTYYDHQLE…LIEIDPPDGL (77 aa)).

The protein belongs to the RimM family. In terms of assembly, binds ribosomal protein uS19.

It localises to the cytoplasm. Functionally, an accessory protein needed during the final step in the assembly of 30S ribosomal subunit, possibly for assembly of the head region. Essential for efficient processing of 16S rRNA. May be needed both before and after RbfA during the maturation of 16S rRNA. It has affinity for free ribosomal 30S subunits but not for 70S ribosomes. The protein is Ribosome maturation factor RimM of Mycobacterium avium (strain 104).